Here is an 89-residue protein sequence, read N- to C-terminus: Small ribosomal subunit protein uS15 (89 aa).

Belongs to the universal ribosomal protein uS15 family. Part of the 30S ribosomal subunit. Forms a bridge to the 50S subunit in the 70S ribosome, contacting the 23S rRNA.

Functionally, one of the primary rRNA binding proteins, it binds directly to 16S rRNA where it helps nucleate assembly of the platform of the 30S subunit by binding and bridging several RNA helices of the 16S rRNA. In terms of biological role, forms an intersubunit bridge (bridge B4) with the 23S rRNA of the 50S subunit in the ribosome. The sequence is that of Small ribosomal subunit protein uS15 from Syntrophobacter fumaroxidans (strain DSM 10017 / MPOB).